A 361-amino-acid polypeptide reads, in one-letter code: Phospho-N-acetylmuramoyl-pentapeptide-transferase (361 aa).

10 helical membrane passes run I27–W47, G70–W90, S97–Y117, Y134–L154, T167–S187, G199–S219, T236–Y256, V263–V283, L288–V308, and K338–L358.

It belongs to the glycosyltransferase 4 family. MraY subfamily. Requires Mg(2+) as cofactor.

It localises to the cell inner membrane. It catalyses the reaction UDP-N-acetyl-alpha-D-muramoyl-L-alanyl-gamma-D-glutamyl-meso-2,6-diaminopimeloyl-D-alanyl-D-alanine + di-trans,octa-cis-undecaprenyl phosphate = di-trans,octa-cis-undecaprenyl diphospho-N-acetyl-alpha-D-muramoyl-L-alanyl-D-glutamyl-meso-2,6-diaminopimeloyl-D-alanyl-D-alanine + UMP. It participates in cell wall biogenesis; peptidoglycan biosynthesis. Its function is as follows. Catalyzes the initial step of the lipid cycle reactions in the biosynthesis of the cell wall peptidoglycan: transfers peptidoglycan precursor phospho-MurNAc-pentapeptide from UDP-MurNAc-pentapeptide onto the lipid carrier undecaprenyl phosphate, yielding undecaprenyl-pyrophosphoryl-MurNAc-pentapeptide, known as lipid I. This Legionella pneumophila (strain Paris) protein is Phospho-N-acetylmuramoyl-pentapeptide-transferase.